Reading from the N-terminus, the 462-residue chain is A-type ATP synthase subunit B (462 aa).

It belongs to the ATPase alpha/beta chains family. In terms of assembly, has multiple subunits with at least A(3), B(3), C, D, E, F, H, I and proteolipid K(x).

It is found in the cell membrane. Its function is as follows. Component of the A-type ATP synthase that produces ATP from ADP in the presence of a proton gradient across the membrane. The B chain is a regulatory subunit. This Methanococcus maripaludis (strain C6 / ATCC BAA-1332) protein is A-type ATP synthase subunit B.